We begin with the raw amino-acid sequence, 258 residues long: 4-hydroxy-tetrahydrodipicolinate reductase (258 aa).

Residues 9-14 (GASGRM), 91-93 (GTT), and 115-118 (SPNM) contribute to the NAD(+) site. His148 (proton donor/acceptor) is an active-site residue. His149 contacts (S)-2,3,4,5-tetrahydrodipicolinate. The active-site Proton donor is the Lys152. 158 to 159 (GT) is a (S)-2,3,4,5-tetrahydrodipicolinate binding site.

This sequence belongs to the DapB family.

The protein resides in the cytoplasm. It carries out the reaction (S)-2,3,4,5-tetrahydrodipicolinate + NAD(+) + H2O = (2S,4S)-4-hydroxy-2,3,4,5-tetrahydrodipicolinate + NADH + H(+). The enzyme catalyses (S)-2,3,4,5-tetrahydrodipicolinate + NADP(+) + H2O = (2S,4S)-4-hydroxy-2,3,4,5-tetrahydrodipicolinate + NADPH + H(+). Its pathway is amino-acid biosynthesis; L-lysine biosynthesis via DAP pathway; (S)-tetrahydrodipicolinate from L-aspartate: step 4/4. Its function is as follows. Catalyzes the conversion of 4-hydroxy-tetrahydrodipicolinate (HTPA) to tetrahydrodipicolinate. This chain is 4-hydroxy-tetrahydrodipicolinate reductase, found in Lawsonia intracellularis (strain PHE/MN1-00).